Reading from the N-terminus, the 2615-residue chain is Collagen alpha-5(VI) chain (2615 aa).

The signal sequence occupies residues 1-18 (MKILLIIFVLIIWTETLA). Positions 19–1394 (DQSPGPGPVY…TCCCTFCKCP (1376 aa)) are nonhelical region. VWFA domains lie at 30–209 (DVVF…IKDV), 236–413 (DLVF…LKKL), 442–612 (DIHF…KNEV), 628–797 (DIMF…ERKL), 814–987 (DVVF…FTLV), 1005–1178 (DVIF…KKRI), and 1194–1376 (DIVV…KLSQ). N-linked (GlcNAc...) asparagine glycans are attached at residues Asn-201 and Asn-260. Asn-835 is a glycosylation site (N-linked (GlcNAc...) asparagine). Collagen-like domains are found at residues 1395–1446 (GIPG…GCPG), 1434–1490 (GPQG…KGDP), 1464–1520 (GDDG…PGQN), 1524–1580 (KGQK…TLGA), 1579–1629 (GAEG…LGKK), and 1674–1729 (GDAG…MAGQ). Residues 1395 to 1728 (GIPGPHGTRG…GQRGIKGMAG (334 aa)) are triple-helical region. The tract at residues 1404–1693 (GLQAMKGSQG…NPGIPGGPGP (290 aa)) is disordered. The short motif at 1430–1432 (RGD) is the Cell attachment site element. Residues 1511 to 1522 (PGDPGNPGQNNN) show a composition bias toward low complexity. Composition is skewed to low complexity over residues 1601–1611 (SQGQKGPQGSP) and 1622–1641 (RPGL…LGPV). The tract at residues 1729-2615 (QPVYSQCDLI…EDKEMEATDI (887 aa)) is nonhelical region. 3 consecutive VWFA domains span residues 1758–1965 (ELVF…MDVV), 1963–2154 (DVVF…AKFL), and 2291–2487 (DVAF…VKPF). A glycan (N-linked (GlcNAc...) asparagine) is linked at Asn-2509.

Belongs to the type VI collagen family. Trimers composed of three different chains: alpha-1(VI), alpha-2(VI), and alpha-3(VI) or alpha-5(VI) or alpha-6(VI). In terms of processing, prolines at the third position of the tripeptide repeating unit (G-X-Y) are hydroxylated in some or all of the chains. Expressed in skin, followed by lung, small intestine, colon and testis. In skin, it is expressed in the epidermis with strongest staining in suprabasal viable layers. In ATOD patients, it is absent in the most differentiated upper spinous and granular layers (at protein level).

Its subcellular location is the secreted. It localises to the extracellular space. It is found in the extracellular matrix. Functionally, collagen VI acts as a cell-binding protein. The protein is Collagen alpha-5(VI) chain (COL6A5) of Homo sapiens (Human).